Consider the following 391-residue polypeptide: Phosphoglycerate kinase (391 aa).

Substrate contacts are provided by residues 21–23 (DLN), arginine 36, 59–62 (HLGR), arginine 113, and arginine 146. ATP contacts are provided by residues lysine 197, glutamate 319, and 345-348 (GGDT).

This sequence belongs to the phosphoglycerate kinase family. Monomer.

The protein resides in the cytoplasm. The enzyme catalyses (2R)-3-phosphoglycerate + ATP = (2R)-3-phospho-glyceroyl phosphate + ADP. It functions in the pathway carbohydrate degradation; glycolysis; pyruvate from D-glyceraldehyde 3-phosphate: step 2/5. This chain is Phosphoglycerate kinase, found in Shewanella sediminis (strain HAW-EB3).